Here is a 150-residue protein sequence, read N- to C-terminus: D-aminoacyl-tRNA deacylase (150 aa).

The short motif at 136–137 (GP) is the Gly-cisPro motif, important for rejection of L-amino acids element.

Belongs to the DTD family. As to quaternary structure, homodimer.

Its subcellular location is the cytoplasm. It carries out the reaction glycyl-tRNA(Ala) + H2O = tRNA(Ala) + glycine + H(+). The enzyme catalyses a D-aminoacyl-tRNA + H2O = a tRNA + a D-alpha-amino acid + H(+). An aminoacyl-tRNA editing enzyme that deacylates mischarged D-aminoacyl-tRNAs. Also deacylates mischarged glycyl-tRNA(Ala), protecting cells against glycine mischarging by AlaRS. Acts via tRNA-based rather than protein-based catalysis; rejects L-amino acids rather than detecting D-amino acids in the active site. By recycling D-aminoacyl-tRNA to D-amino acids and free tRNA molecules, this enzyme counteracts the toxicity associated with the formation of D-aminoacyl-tRNA entities in vivo and helps enforce protein L-homochirality. This Staphylococcus aureus (strain MRSA252) protein is D-aminoacyl-tRNA deacylase.